We begin with the raw amino-acid sequence, 207 residues long: Protein GrpE (207 aa).

Positions 1–33 are disordered; the sequence is MTDPNGPKDIPEQSAEAAEPVVSKPYIMPDDPE.

It belongs to the GrpE family. Homodimer.

It is found in the cytoplasm. Its function is as follows. Participates actively in the response to hyperosmotic and heat shock by preventing the aggregation of stress-denatured proteins, in association with DnaK and GrpE. It is the nucleotide exchange factor for DnaK and may function as a thermosensor. Unfolded proteins bind initially to DnaJ; upon interaction with the DnaJ-bound protein, DnaK hydrolyzes its bound ATP, resulting in the formation of a stable complex. GrpE releases ADP from DnaK; ATP binding to DnaK triggers the release of the substrate protein, thus completing the reaction cycle. Several rounds of ATP-dependent interactions between DnaJ, DnaK and GrpE are required for fully efficient folding. This chain is Protein GrpE, found in Rhodopseudomonas palustris (strain BisA53).